A 1201-amino-acid polypeptide reads, in one-letter code: Transcription-repair-coupling factor (1201 aa).

The segment at 1-27 (MRLLITLGPSGSTHGHSLHTDAGRRRG) is disordered. The 162-residue stretch at 670–831 (DMQKPEPMDR…MSGVRDMSII (162 aa)) folds into the Helicase ATP-binding domain. 683-690 (GDVGYGKT) is a binding site for ATP. The short motif at 784 to 787 (DEEQ) is the DEEQ box element. Residues 852 to 1006 (VVKEAIEREV…GFSIASHDLE (155 aa)) enclose the Helicase C-terminal domain.

In the N-terminal section; belongs to the UvrB family. It in the C-terminal section; belongs to the helicase family. RecG subfamily.

Its subcellular location is the cytoplasm. Its function is as follows. Couples transcription and DNA repair by recognizing RNA polymerase (RNAP) stalled at DNA lesions. Mediates ATP-dependent release of RNAP and its truncated transcript from the DNA, and recruitment of nucleotide excision repair machinery to the damaged site. The chain is Transcription-repair-coupling factor from Myxococcus xanthus.